Here is a 318-residue protein sequence, read N- to C-terminus: Myoblast determination protein 1 (318 aa).

Met1 participates in a covalent cross-link: Peptide (Met-Gly) (interchain with G-Cter in ubiquitin). Lys104 is subject to N6-methyllysine; by EHMT2. The bHLH domain occupies 109 to 160 (DRRKAATMRERRRLSKVNEAFETLKRCTSSNPNQRLPKVEILRNAIRYIEGL). Disordered regions lie at residues 174–224 (AAAA…RRRN) and 266–318 (APAL…YQVL). Polar residues predominate over residues 197–207 (SDASSPRSNCS). Positions 266 to 276 (APALLLADAPP) are enriched in low complexity.

As to quaternary structure, efficient DNA binding requires dimerization with another bHLH protein. Seems to form active heterodimers with ITF-2. Interacts with SUV39H1. Interacts with DDX5. Interacts with CHD2. Interacts with TSC22D3. Interacts with SETD3. Interacts with P-TEFB complex; promotes the transcriptional activity of MYOD1 through its CDK9-mediated phosphorylation. Interacts with CSRP3. Interacts with NUPR1. Post-translationally, phosphorylated by CDK9. This phosphorylation promotes its function in muscle differentiation. In terms of processing, acetylated by a complex containing EP300 and PCAF. The acetylation is essential to activate target genes. Conversely, its deacetylation by SIRT1 inhibits its function. Ubiquitinated on the N-terminus; which is required for proteasomal degradation. Post-translationally, methylation at Lys-104 by EHMT2/G9a inhibits myogenic activity.

It localises to the nucleus. Acts as a transcriptional activator that promotes transcription of muscle-specific target genes and plays a role in muscle differentiation. Together with MYF5 and MYOG, co-occupies muscle-specific gene promoter core region during myogenesis. Induces fibroblasts to differentiate into myoblasts. Interacts with and is inhibited by the twist protein. This interaction probably involves the basic domains of both proteins. The polypeptide is Myoblast determination protein 1 (MYOD1) (Bos taurus (Bovine)).